A 304-amino-acid chain; its full sequence is ATP phosphoribosyltransferase (304 aa).

This sequence belongs to the ATP phosphoribosyltransferase family.

The protein resides in the cytoplasm. It carries out the reaction 1-(5-phospho-beta-D-ribosyl)-ATP + diphosphate = 5-phospho-alpha-D-ribose 1-diphosphate + ATP. It participates in amino-acid biosynthesis; L-histidine biosynthesis; L-histidine from 5-phospho-alpha-D-ribose 1-diphosphate: step 1/9. Catalyzes the condensation of ATP and 5-phosphoribose 1-diphosphate to form N'-(5'-phosphoribosyl)-ATP (PR-ATP). Has a crucial role in the pathway because the rate of histidine biosynthesis seems to be controlled primarily by regulation of the enzymatic activity. This is ATP phosphoribosyltransferase (HIS1) from Debaryomyces hansenii (strain ATCC 36239 / CBS 767 / BCRC 21394 / JCM 1990 / NBRC 0083 / IGC 2968) (Yeast).